The following is a 563-amino-acid chain: Protein disulfide isomerase-like 1-4 (563 aa).

The N-terminal stretch at 1–22 (MRSRSLLLVALATLLLHASASA) is a signal peptide. A disordered region spans residues 40–64 (NDPDGWLQEGSPDDDDDDDLFHHGQ). In terms of domain architecture, Thioredoxin 1 spans 46-180 (LQEGSPDDDD…IVSWVNKKLA (135 aa)). A glycan (N-linked (GlcNAc...) asparagine) is linked at Asn82. Residues Cys102 and Cys105 each act as nucleophile in the active site. Cys102 and Cys105 are oxidised to a cystine. Asn185 and Asn315 each carry an N-linked (GlcNAc...) asparagine glycan. The Thioredoxin 2 domain maps to 394-523 (FLEEKLTPFY…MYKFIKKHAS (130 aa)). Active-site nucleophile residues include Cys444 and Cys447. Cys444 and Cys447 form a disulfide bridge. The segment covering 529 to 542 (KRPDSSATKTEKDQ) has biased composition (basic and acidic residues). The interval 529–563 (KRPDSSATKTEKDQSTASTNLRGERSSGTNFKDEL) is disordered. Over residues 543 to 563 (STASTNLRGERSSGTNFKDEL) the composition is skewed to polar residues. The Prevents secretion from ER motif lies at 560–563 (KDEL).

Belongs to the protein disulfide isomerase family.

The protein resides in the endoplasmic reticulum lumen. The catalysed reaction is Catalyzes the rearrangement of -S-S- bonds in proteins.. In terms of biological role, acts as a protein-folding catalyst that interacts with nascent polypeptides to catalyze the formation, isomerization, and reduction or oxidation of disulfide bonds. May play a role in storage protein biogenesis. In Oryza sativa subsp. japonica (Rice), this protein is Protein disulfide isomerase-like 1-4 (PDIL1-4).